A 283-amino-acid chain; its full sequence is Thymidylate synthase (283 aa).

R33 contacts dUMP. H63 serves as a coordination point for (6R)-5,10-methylene-5,6,7,8-tetrahydrofolate. Position 138–139 (138–139 (RR)) interacts with dUMP. C158 functions as the Nucleophile in the catalytic mechanism. DUMP-binding positions include 185 to 188 (RSAD), N196, and 226 to 228 (HIY). D188 is a binding site for (6R)-5,10-methylene-5,6,7,8-tetrahydrofolate. A282 is a binding site for (6R)-5,10-methylene-5,6,7,8-tetrahydrofolate.

It belongs to the thymidylate synthase family. Bacterial-type ThyA subfamily. As to quaternary structure, homodimer.

It localises to the cytoplasm. The catalysed reaction is dUMP + (6R)-5,10-methylene-5,6,7,8-tetrahydrofolate = 7,8-dihydrofolate + dTMP. It functions in the pathway pyrimidine metabolism; dTTP biosynthesis. In terms of biological role, catalyzes the reductive methylation of 2'-deoxyuridine-5'-monophosphate (dUMP) to 2'-deoxythymidine-5'-monophosphate (dTMP) while utilizing 5,10-methylenetetrahydrofolate (mTHF) as the methyl donor and reductant in the reaction, yielding dihydrofolate (DHF) as a by-product. This enzymatic reaction provides an intracellular de novo source of dTMP, an essential precursor for DNA biosynthesis. This Methylibium petroleiphilum (strain ATCC BAA-1232 / LMG 22953 / PM1) protein is Thymidylate synthase.